A 265-amino-acid chain; its full sequence is UPF0246 protein NT01EI_0662 (265 aa).

The protein belongs to the UPF0246 family.

The chain is UPF0246 protein NT01EI_0662 from Edwardsiella ictaluri (strain 93-146).